A 128-amino-acid chain; its full sequence is Large ribosomal subunit protein bL17 (128 aa).

It belongs to the bacterial ribosomal protein bL17 family. In terms of assembly, part of the 50S ribosomal subunit. Contacts protein L32.

The polypeptide is Large ribosomal subunit protein bL17 (Streptococcus pyogenes serotype M5 (strain Manfredo)).